The chain runs to 419 residues: Endochitinase 2 (419 aa).

The signal sequence occupies residues 1–18 (MHHLRALVGVGLAGLAAG). The GH18 domain occupies 35-343 (AQNVVYWGQN…QQAKSILVNG (309 aa)). The N-linked (GlcNAc...) asparagine glycan is linked to N153. E173 serves as the catalytic Proton donor. N237 and N256 each carry an N-linked (GlcNAc...) asparagine glycan. Residues 350-381 (GPPSSTPATAPAPTATTMPSSTSVSSPAASPT) are compositionally biased toward low complexity. A disordered region spans residues 350–386 (GPPSSTPATAPAPTATTMPSSTSVSSPAASPTGGTVP). The 37-residue stretch at 383–419 (GTVPQWGQCGGEGYSGPTQCVAPYQCVKQGDWWSSCR) folds into the CBM1 domain.

It belongs to the glycosyl hydrolase 18 family. Chitinase class III subfamily.

It is found in the secreted. The enzyme catalyses Random endo-hydrolysis of N-acetyl-beta-D-glucosaminide (1-&gt;4)-beta-linkages in chitin and chitodextrins.. Secreted chitinase involved in the degradation of chitin, a component of the cell walls of fungi and exoskeletal elements of some animals (including worms and arthropods). Participates in the infection process and directly acts in the penetration process of the host cuticle. This chain is Endochitinase 2 (chi2), found in Metarhizium robertsii (strain ARSEF 23 / ATCC MYA-3075) (Metarhizium anisopliae (strain ARSEF 23)).